A 281-amino-acid polypeptide reads, in one-letter code: Eukaryotic translation initiation factor 3 subunit G (281 aa).

The tract at residues 1–32 is disordered; it reads MSRPAGRTDWAEEDDETELALPSQTVVKNKDG. Residues 202–280 form the RRM domain; that stretch reads ATLRVTNVSE…LILRVEFAKK (79 aa).

This sequence belongs to the eIF-3 subunit G family. As to quaternary structure, component of the eukaryotic translation initiation factor 3 (eIF-3) complex.

It localises to the cytoplasm. In terms of biological role, RNA-binding component of the eukaryotic translation initiation factor 3 (eIF-3) complex, which is involved in protein synthesis of a specialized repertoire of mRNAs and, together with other initiation factors, stimulates binding of mRNA and methionyl-tRNAi to the 40S ribosome. The eIF-3 complex specifically targets and initiates translation of a subset of mRNAs involved in cell proliferation. This subunit can bind 18S rRNA. In Phaeosphaeria nodorum (strain SN15 / ATCC MYA-4574 / FGSC 10173) (Glume blotch fungus), this protein is Eukaryotic translation initiation factor 3 subunit G.